The primary structure comprises 152 residues: Protein SprT-like (152 aa).

The SprT-like domain occupies 7 to 148 (QRLVEEVSLQ…GKCKGKLNLI (142 aa)). His67 is a Zn(2+) binding site. Glu68 is a catalytic residue. Zn(2+) is bound at residue His71.

This sequence belongs to the SprT family. Requires Zn(2+) as cofactor.

Its subcellular location is the cytoplasm. In Bacillus anthracis (strain A0248), this protein is Protein SprT-like.